Here is a 253-residue protein sequence, read N- to C-terminus: Chemokine-binding protein (253 aa).

The first 17 residues, 1–17 (MKQYIVLACMCLAAAAM), serve as a signal peptide directing secretion. The tract at residues 62–87 (TEITESESDPEVESEDDSTSVEDVDP) is disordered. The span at 65–86 (TESESDPEVESEDDSTSVEDVD) shows a compositional bias: acidic residues.

Belongs to the orthopoxvirus OPG001 family. In terms of assembly, binds to host CC chemokines, such as RANTES/CCL5, MIP-1alpha/CCL3, MCP-1/CCL2 and eotaxin.

The protein resides in the secreted. In terms of biological role, inhibits host immune defense by binding to host chemokines. Binds host CC chemokines (beta chemokines) such as RANTES with high affinity, but not CXC or C chemokines (alpha and gamma chemokines). This chain is Chemokine-binding protein (OPG001), found in Variola virus (isolate Human/India/Ind3/1967) (VARV).